Reading from the N-terminus, the 273-residue chain is SPRY domain-containing SOCS box protein 1 (273 aa).

Residue Y31 is modified to Phosphotyrosine. One can recognise a B30.2/SPRY domain in the interval 33–231; sequence KPTRLDLLLD…IRMRYLNGLD (199 aa). An SOCS box domain is found at 232–273; that stretch reads PEPLPLMDLCRRSVRLALGKGRLGEIHALPLPASLKAYLLYQ.

This sequence belongs to the SPSB family. Component of the probable ECS(SPSB1) E3 ubiquitin-protein ligase complex which contains CUL5, RNF7/RBX2, Elongin BC complex and SPSB1. Interacts with CUL5, RNF7, ELOB and ELOC. Directly interacts with MET tyrosine kinase domain in the presence and in the absence of HGF, however HGF treatment has a positive effect on this interaction. When phosphorylated, interacts with RASA1 without affecting its stability. Interacts (via B30.2/SPRY domain) with PAWR; this interaction is direct and occurs in association with the Elongin BC complex. Interacts with NOS2 and EPHB2.

It localises to the cytoplasm. Its subcellular location is the cytosol. Its pathway is protein modification; protein ubiquitination. Its function is as follows. Substrate recognition component of a SCF-like ECS (Elongin BC-CUL2/5-SOCS-box protein) E3 ubiquitin-protein ligase complex which mediates the ubiquitination and subsequent proteasomal degradation of target proteins. Negatively regulates nitric oxide (NO) production and limits cellular toxicity in activated macrophages by mediating the ubiquitination and proteasomal degradation of NOS2. Acts as a bridge which links NOS2 with the ECS E3 ubiquitin ligase complex components ELOC and CUL5. The polypeptide is SPRY domain-containing SOCS box protein 1 (SPSB1) (Bos taurus (Bovine)).